Here is an 86-residue protein sequence, read N- to C-terminus: MNYLITISLALLLMTGVASGVRDGYIADAGNCGYTCVANDYCNTECTKNGAESGYCQWFGRYGNACWCIKLPDKVPIKVPGKCNGR.

Positions 1–20 (MNYLITISLALLLMTGVASG) are cleaved as a signal peptide. The region spanning 22–84 (RDGYIADAGN…VPIKVPGKCN (63 aa)) is the LCN-type CS-alpha/beta domain. 4 disulfides stabilise this stretch: cysteine 32/cysteine 83, cysteine 36/cysteine 56, cysteine 42/cysteine 66, and cysteine 46/cysteine 68. Asparagine 84 bears the Asparagine amide mark.

It belongs to the long (4 C-C) scorpion toxin superfamily. Sodium channel inhibitor family. Alpha subfamily. As to expression, expressed by the venom gland.

The protein resides in the secreted. Alpha toxins bind voltage-independently at site-3 of sodium channels (Nav) and inhibit the inactivation of the activated channels, thereby blocking neuronal transmission. The chain is Toxin Aam2 from Androctonus amoreuxi (African fattail scorpion).